A 373-amino-acid chain; its full sequence is Probable neutral protease 2 homolog MCYG_05201 (373 aa).

The first 19 residues, 1–19, serve as a signal peptide directing secretion; the sequence is MQFFTALAAVGALVAPALA. A propeptide spanning residues 20 to 187 is cleaved from the precursor; that stretch reads LPTQVPANQS…AHIVGTIDKR (168 aa). Intrachain disulfides connect Cys-195-Cys-265 and Cys-272-Cys-290. A Zn(2+)-binding site is contributed by His-314. The active site involves Glu-315. Zn(2+) contacts are provided by His-318 and Asp-329.

It belongs to the peptidase M35 family. It depends on Zn(2+) as a cofactor.

It localises to the secreted. The enzyme catalyses Preferential cleavage of bonds with hydrophobic residues in P1'. Also 3-Asn-|-Gln-4 and 8-Gly-|-Ser-9 bonds in insulin B chain.. Functionally, probable secreted metalloprotease that shows high activities on basic nuclear substrates such as histone and protamine. May be involved in virulence. The sequence is that of Probable neutral protease 2 homolog MCYG_05201 from Arthroderma otae (strain ATCC MYA-4605 / CBS 113480) (Microsporum canis).